The chain runs to 547 residues: ATP synthase subunit alpha (547 aa).

172–179 (GDRKTGKT) lines the ATP pocket.

It belongs to the ATPase alpha/beta chains family. As to quaternary structure, F-type ATPases have 2 components, CF(1) - the catalytic core - and CF(0) - the membrane proton channel. CF(1) has five subunits: alpha(3), beta(3), gamma(1), delta(1), epsilon(1). CF(0) has three main subunits: a(1), b(2) and c(9-12). The alpha and beta chains form an alternating ring which encloses part of the gamma chain. CF(1) is attached to CF(0) by a central stalk formed by the gamma and epsilon chains, while a peripheral stalk is formed by the delta and b chains.

It localises to the cell membrane. It carries out the reaction ATP + H2O + 4 H(+)(in) = ADP + phosphate + 5 H(+)(out). Produces ATP from ADP in the presence of a proton gradient across the membrane. The alpha chain is a regulatory subunit. This is ATP synthase subunit alpha from Corynebacterium glutamicum (strain R).